The following is a 389-amino-acid chain: S-adenosylmethionine synthase (389 aa).

Histidine 17 contributes to the ATP binding site. Aspartate 19 is a binding site for Mg(2+). Position 45 (glutamate 45) interacts with K(+). 2 residues coordinate L-methionine: glutamate 58 and glutamine 101. The flexible loop stretch occupies residues 101 to 111 (QSPDIGQGVDV). ATP contacts are provided by residues 160–162 (DGK), 226–227 (RF), aspartate 235, 241–242 (RK), alanine 258, and lysine 262. Aspartate 235 is an L-methionine binding site. Residue lysine 266 participates in L-methionine binding.

Belongs to the AdoMet synthase family. In terms of assembly, homotetramer; dimer of dimers. It depends on Mg(2+) as a cofactor. The cofactor is K(+).

Its subcellular location is the cytoplasm. The catalysed reaction is L-methionine + ATP + H2O = S-adenosyl-L-methionine + phosphate + diphosphate. It participates in amino-acid biosynthesis; S-adenosyl-L-methionine biosynthesis; S-adenosyl-L-methionine from L-methionine: step 1/1. Its function is as follows. Catalyzes the formation of S-adenosylmethionine (AdoMet) from methionine and ATP. The overall synthetic reaction is composed of two sequential steps, AdoMet formation and the subsequent tripolyphosphate hydrolysis which occurs prior to release of AdoMet from the enzyme. The protein is S-adenosylmethionine synthase of Anaeromyxobacter sp. (strain Fw109-5).